Consider the following 105-residue polypeptide: Pyrimidine/purine nucleoside phosphorylase (105 aa).

This sequence belongs to the nucleoside phosphorylase PpnP family.

The catalysed reaction is a purine D-ribonucleoside + phosphate = a purine nucleobase + alpha-D-ribose 1-phosphate. It carries out the reaction adenosine + phosphate = alpha-D-ribose 1-phosphate + adenine. The enzyme catalyses cytidine + phosphate = cytosine + alpha-D-ribose 1-phosphate. It catalyses the reaction guanosine + phosphate = alpha-D-ribose 1-phosphate + guanine. The catalysed reaction is inosine + phosphate = alpha-D-ribose 1-phosphate + hypoxanthine. It carries out the reaction thymidine + phosphate = 2-deoxy-alpha-D-ribose 1-phosphate + thymine. The enzyme catalyses uridine + phosphate = alpha-D-ribose 1-phosphate + uracil. It catalyses the reaction xanthosine + phosphate = alpha-D-ribose 1-phosphate + xanthine. Its function is as follows. Catalyzes the phosphorolysis of diverse nucleosides, yielding D-ribose 1-phosphate and the respective free bases. Can use uridine, adenosine, guanosine, cytidine, thymidine, inosine and xanthosine as substrates. Also catalyzes the reverse reactions. The sequence is that of Pyrimidine/purine nucleoside phosphorylase from Clostridioides difficile (strain 630) (Peptoclostridium difficile).